A 192-amino-acid chain; its full sequence is Charged multivesicular body protein 1 (192 aa).

2 coiled-coil regions span residues 7 to 35 (QLKFTSKQLEKQSKKSEQSEKAQKIKLKK) and 102 to 125 (NMDLEKITQVMDQFERQFEDLDVQ). A disordered region spans residues 164-192 (QMGSAPSEKVQQGETDELTERLNRLKQKN).

The protein belongs to the SNF7 family. Probable peripherally associated component of the endosomal sorting required for transport complex III (ESCRT-III).

Its subcellular location is the endosome membrane. Its function is as follows. Probable peripherally associated component of the endosomal sorting required for transport complex III (ESCRT-III) which is involved in multivesicular bodies (MVBs) formation and sorting of endosomal cargo proteins into MVBs. MVBs contain intraluminal vesicles (ILVs) that are generated by invagination and scission from the limiting membrane of the endosome and are delivered to lysosomes enabling degradation of membrane proteins. This chain is Charged multivesicular body protein 1 (chmp1), found in Dictyostelium discoideum (Social amoeba).